Reading from the N-terminus, the 122-residue chain is Large ribosomal subunit protein eL8 (122 aa).

Belongs to the eukaryotic ribosomal protein eL8 family. Part of the 50S ribosomal subunit. Probably part of the RNase P complex.

The protein resides in the cytoplasm. In terms of biological role, multifunctional RNA-binding protein that recognizes the K-turn motif in ribosomal RNA, the RNA component of RNase P, box H/ACA, box C/D and box C'/D' sRNAs. This Methanothrix thermoacetophila (strain DSM 6194 / JCM 14653 / NBRC 101360 / PT) (Methanosaeta thermophila) protein is Large ribosomal subunit protein eL8.